A 254-amino-acid polypeptide reads, in one-letter code: MDIIQAIIIGIIEGFTEFLPISSTGHMIVASKFLGVAETDLTKAYEVIIQFAAILAVMLIYREKITFKKIDLWMKLLFAFLPLAIVGFIFKDQVKALFNVQVVAWMFIIGGIIFLIVEYYYKEQAWHVKDVEKVSWTQAWWVGFAQIFSLIPGTSRAGATIIGGLLAGLDRKTSAEFSFLLAIPVMAVVSGYDLLKHYQDFADANWGAFLIGFIVAFIVAYATIKLFLVFLQRFTFVAFGIYRIIFGIFLLMIL.

8 consecutive transmembrane segments (helical) span residues 1–21 (MDII…FLPI), 41–61 (LTKA…MLIY), 70–90 (IDLW…GFIF), 97–117 (LFNV…FLIV), 134–154 (VSWT…IPGT), 175–195 (AEFS…YDLL), 209–229 (FLIG…LFLV), and 234–254 (FTFV…LMIL).

Belongs to the UppP family.

It localises to the cell inner membrane. It carries out the reaction di-trans,octa-cis-undecaprenyl diphosphate + H2O = di-trans,octa-cis-undecaprenyl phosphate + phosphate + H(+). Catalyzes the dephosphorylation of undecaprenyl diphosphate (UPP). Confers resistance to bacitracin. The sequence is that of Undecaprenyl-diphosphatase from Sulfurovum sp. (strain NBC37-1).